Consider the following 237-residue polypeptide: Insulin-like growth factor-binding protein 6 (237 aa).

The signal sequence occupies residues 1–25 (MTPHRLLPPLLLTLLLAARPGGALA). One can recognise an IGFBP N-terminal domain in the interval 26 to 105 (RCPGCGQGVS…LQGRGRCGRA (80 aa)). 5 disulfide bridges follow: cysteine 27–cysteine 30, cysteine 38–cysteine 42, cysteine 55–cysteine 61, cysteine 69–cysteine 82, and cysteine 76–cysteine 102. Residues 101 to 158 (RCGRARTPSGENPKESKPQAGTARSQDVNRRDQQRNSGTSTTPSRSNSGGVQDTEMGP) form a disordered region. Residues 135-151 (RNSGTSTTPSRSNSGGV) show a composition bias toward polar residues. The region spanning 156–231 (MGPCRKHLDS…SEGGDGSSLC (76 aa)) is the Thyroglobulin type-1 domain. Intrachain disulfides connect cysteine 159–cysteine 186, cysteine 197–cysteine 208, and cysteine 210–cysteine 231. The interval 215–237 (GQPLPGSSEGGDGSSLCPTGSSG) is disordered.

As to quaternary structure, interacts (via C-terminal domain) with PHB2. O-glycosylated.

The protein localises to the secreted. IGF-binding proteins prolong the half-life of the IGFs and have been shown to either inhibit or stimulate the growth promoting effects of the IGFs on cell culture. They alter the interaction of IGFs with their cell surface receptors. Activates the MAPK signaling pathway and induces cell migration. This chain is Insulin-like growth factor-binding protein 6 (IGFBP6), found in Bos taurus (Bovine).